A 418-amino-acid polypeptide reads, in one-letter code: tRNA-2-methylthio-N(6)-dimethylallyladenosine synthase (418 aa).

Positions 2 to 118 constitute an MTTase N-terminal domain; that stretch reads PGYYLWTIGC…WREIPEGFIL (117 aa). 6 residues coordinate [4Fe-4S] cluster: cysteine 11, cysteine 47, cysteine 81, cysteine 134, cysteine 138, and cysteine 141. The Radical SAM core domain occupies 120 to 351; the sequence is LRPPVSANVT…EDLQKETVGK (232 aa). The TRAM domain occupies 346 to 414; sequence KETVGKANAA…PWSLQAKLVN (69 aa).

It belongs to the methylthiotransferase family. MiaB subfamily. As to quaternary structure, monomer. [4Fe-4S] cluster serves as cofactor.

The protein localises to the cytoplasm. It catalyses the reaction N(6)-dimethylallyladenosine(37) in tRNA + (sulfur carrier)-SH + AH2 + 2 S-adenosyl-L-methionine = 2-methylsulfanyl-N(6)-dimethylallyladenosine(37) in tRNA + (sulfur carrier)-H + 5'-deoxyadenosine + L-methionine + A + S-adenosyl-L-homocysteine + 2 H(+). Its function is as follows. Catalyzes the methylthiolation of N6-(dimethylallyl)adenosine (i(6)A), leading to the formation of 2-methylthio-N6-(dimethylallyl)adenosine (ms(2)i(6)A) at position 37 in tRNAs that read codons beginning with uridine. In Dehalococcoides mccartyi (strain ATCC BAA-2100 / JCM 16839 / KCTC 5957 / BAV1), this protein is tRNA-2-methylthio-N(6)-dimethylallyladenosine synthase.